The primary structure comprises 290 residues: Small ribosomal subunit biogenesis GTPase RsgA (290 aa).

The 152-residue stretch at 62 to 213 (KNSLVRPPIV…IADTPGFSSL (152 aa)) folds into the CP-type G domain. Residues 111-114 (SKTD) and 156-164 (GQTGVGKTT) contribute to the GTP site. Residues C237, C242, H244, and C250 each coordinate Zn(2+).

It belongs to the TRAFAC class YlqF/YawG GTPase family. RsgA subfamily. As to quaternary structure, monomer. Associates with 30S ribosomal subunit, binds 16S rRNA. Zn(2+) is required as a cofactor.

It is found in the cytoplasm. In terms of biological role, one of several proteins that assist in the late maturation steps of the functional core of the 30S ribosomal subunit. Helps release RbfA from mature subunits. May play a role in the assembly of ribosomal proteins into the subunit. Circularly permuted GTPase that catalyzes slow GTP hydrolysis, GTPase activity is stimulated by the 30S ribosomal subunit. The chain is Small ribosomal subunit biogenesis GTPase RsgA from Streptococcus mutans serotype c (strain ATCC 700610 / UA159).